The primary structure comprises 277 residues: Undecaprenyl-diphosphatase (277 aa).

Helical transmembrane passes span 1–21, 38–58, 93–113, 118–138, 168–188, 191–211, 222–242, and 256–276; these read MDII…FLPV, SSLA…LWFF, LVWY…LFES, LFAG…TILY, AILP…VIGL, EFAA…AFVV, FNAL…YLAI, and IFAY…ITHL.

This sequence belongs to the UppP family.

Its subcellular location is the cell membrane. The enzyme catalyses di-trans,octa-cis-undecaprenyl diphosphate + H2O = di-trans,octa-cis-undecaprenyl phosphate + phosphate + H(+). Catalyzes the dephosphorylation of undecaprenyl diphosphate (UPP). This Methanobrevibacter smithii (strain ATCC 35061 / DSM 861 / OCM 144 / PS) protein is Undecaprenyl-diphosphatase.